A 396-amino-acid chain; its full sequence is Phosphoglycerate kinase (396 aa).

Residues 19-21 (DFN), R35, 58-61 (HLGR), R117, and R150 each bind substrate. Residues K201, E323, and 349-352 (GGDT) contribute to the ATP site.

Belongs to the phosphoglycerate kinase family. Monomer.

The protein localises to the cytoplasm. The enzyme catalyses (2R)-3-phosphoglycerate + ATP = (2R)-3-phospho-glyceroyl phosphate + ADP. The protein operates within carbohydrate degradation; glycolysis; pyruvate from D-glyceraldehyde 3-phosphate: step 2/5. In Desulfosudis oleivorans (strain DSM 6200 / JCM 39069 / Hxd3) (Desulfococcus oleovorans), this protein is Phosphoglycerate kinase.